Consider the following 350-residue polypeptide: MKKTAIAIAVALAGFATVAQAAPKDNTWYAGAKLGWSQYHDTGFIHNDGPTHENQLGAGAFGGYQVNPYVGFEMGYDWLGRMPYKGDNTNGAYKAQGVQLTAKLGYPITDDLDVYTRLGGMVWRADTKSNVPGGASTKDHDTGVSPVFAGGIEYAITPEIATRLEYQWTNNIGDANTIGTRPDNGLLSVGVSYRFGQQEAAPVVAPAPAPAPEVQTKHFTLKSDVLFNFNKSTLKPEGQQALDQLYSQLSNLDPKDGSVVVLGFTDRIGSDAYNQGLSEKRAQSVVDYLISKGIPSDKISARGMGESNPVTGNTCDNVKPRAALIDCLAPDRRVEIEVKGVKDVVTQPQA.

An N-terminal signal peptide occupies residues 1–21 (MKKTAIAIAVALAGFATVAQA). 8 beta stranded membrane-spanning segments follow: residues 27–37 (TWYAGAKLGWS), 55–66 (QLGAGAFGGYQV), 70–78 (VGFEMGYDW), 96–107 (QGVQLTAKLGYP), 112–120 (LDVYTRLGG), 146–155 (PVFAGGIEYA), 160–167 (IATRLEYQ), and 186–194 (LLSVGVSYR). 4 tandem repeats follow at residues 205–206 (AP), 207–208 (AP), 209–210 (AP), and 211–212 (AP). The interval 205 to 212 (APAPAPAP) is 4 X 2 AA tandem repeats of A-P. The OmpA-like domain maps to 214–342 (VQTKHFTLKS…RVEIEVKGVK (129 aa)). A disulfide bond links Cys315 and Cys327.

This sequence belongs to the outer membrane OOP (TC 1.B.6) superfamily. OmpA family. Monomer and homodimer.

The protein localises to the cell outer membrane. Its function is as follows. With TolR probably plays a role in maintaining the position of the peptidoglycan cell wall in the periplasm. Acts as a porin with low permeability that allows slow penetration of small solutes; an internal gate slows down solute passage. Required for conjugation with F-type plasmids; probably serves as the mating receptor on recipient cells. In Salmonella typhi, this protein is Outer membrane protein A.